The following is a 302-amino-acid chain: Glutamate/aspartate import solute-binding protein (302 aa).

The first 22 residues, 1–22, serve as a signal peptide directing secretion; the sequence is MQLRKPATAILALALSAGLAQA.

Belongs to the bacterial solute-binding protein 3 family. As to quaternary structure, the complex is composed of two ATP-binding proteins (GltL), two transmembrane proteins (GltJ and GltK) and a solute-binding protein (GltI).

Its subcellular location is the periplasm. In terms of biological role, part of the ABC transporter complex GltIJKL involved in glutamate and aspartate uptake. Binds to both glutamate and aspartate. This Escherichia coli (strain K12) protein is Glutamate/aspartate import solute-binding protein (gltI).